We begin with the raw amino-acid sequence, 193 residues long: Thymidine kinase (193 aa).

ATP contacts are provided by residues 16–23 (GPMFSGKS) and 89–92 (DEIQ). The Proton acceptor role is filled by Glu90. Zn(2+) is bound by residues Cys146, Cys149, Cys184, and Cys187.

The protein belongs to the thymidine kinase family. As to quaternary structure, homotetramer.

It is found in the cytoplasm. The catalysed reaction is thymidine + ATP = dTMP + ADP + H(+). The protein is Thymidine kinase of Caldanaerobacter subterraneus subsp. tengcongensis (strain DSM 15242 / JCM 11007 / NBRC 100824 / MB4) (Thermoanaerobacter tengcongensis).